A 149-amino-acid chain; its full sequence is SsrA-binding protein (149 aa).

The interval 121-149 (GKGEHDKRDTIKDREGKREVERAMKSRSR) is disordered.

This sequence belongs to the SmpB family.

It is found in the cytoplasm. Its function is as follows. Required for rescue of stalled ribosomes mediated by trans-translation. Binds to transfer-messenger RNA (tmRNA), required for stable association of tmRNA with ribosomes. tmRNA and SmpB together mimic tRNA shape, replacing the anticodon stem-loop with SmpB. tmRNA is encoded by the ssrA gene; the 2 termini fold to resemble tRNA(Ala) and it encodes a 'tag peptide', a short internal open reading frame. During trans-translation Ala-aminoacylated tmRNA acts like a tRNA, entering the A-site of stalled ribosomes, displacing the stalled mRNA. The ribosome then switches to translate the ORF on the tmRNA; the nascent peptide is terminated with the 'tag peptide' encoded by the tmRNA and targeted for degradation. The ribosome is freed to recommence translation, which seems to be the essential function of trans-translation. The protein is SsrA-binding protein of Polaromonas sp. (strain JS666 / ATCC BAA-500).